The primary structure comprises 669 residues: UvrABC system protein B (669 aa).

Residues 26-183 (EGLEDGLAHQ…RRLADLQYTR (158 aa)) form the Helicase ATP-binding domain. Residue 39-46 (GVTGSGKT) participates in ATP binding. Residues 92-115 (YYDYYQPEAYVPSSDTFIEKDASV) carry the Beta-hairpin motif. The Helicase C-terminal domain maps to 431–593 (QVDDLLSEIR…IVPKGLNKKI (163 aa)). The 36-residue stretch at 629–664 (EKEIQRLETEMYQHAKDLEFEKAAQTRDKLQTLRAQ) folds into the UVR domain.

It belongs to the UvrB family. In terms of assembly, forms a heterotetramer with UvrA during the search for lesions. Interacts with UvrC in an incision complex.

It localises to the cytoplasm. The UvrABC repair system catalyzes the recognition and processing of DNA lesions. A damage recognition complex composed of 2 UvrA and 2 UvrB subunits scans DNA for abnormalities. Upon binding of the UvrA(2)B(2) complex to a putative damaged site, the DNA wraps around one UvrB monomer. DNA wrap is dependent on ATP binding by UvrB and probably causes local melting of the DNA helix, facilitating insertion of UvrB beta-hairpin between the DNA strands. Then UvrB probes one DNA strand for the presence of a lesion. If a lesion is found the UvrA subunits dissociate and the UvrB-DNA preincision complex is formed. This complex is subsequently bound by UvrC and the second UvrB is released. If no lesion is found, the DNA wraps around the other UvrB subunit that will check the other stand for damage. The sequence is that of UvrABC system protein B from Proteus mirabilis (strain HI4320).